The chain runs to 337 residues: Ribosomal RNA small subunit methyltransferase H (337 aa).

S-adenosyl-L-methionine-binding positions include 36 to 38 (GGH), Asp56, Phe82, Asp100, and Gln107. The disordered stretch occupies residues 315-337 (LEERSKRIPNPQSPIPASQGDAQ).

The protein belongs to the methyltransferase superfamily. RsmH family.

It is found in the cytoplasm. It carries out the reaction cytidine(1402) in 16S rRNA + S-adenosyl-L-methionine = N(4)-methylcytidine(1402) in 16S rRNA + S-adenosyl-L-homocysteine + H(+). Functionally, specifically methylates the N4 position of cytidine in position 1402 (C1402) of 16S rRNA. The chain is Ribosomal RNA small subunit methyltransferase H from Xanthomonas euvesicatoria pv. vesicatoria (strain 85-10) (Xanthomonas campestris pv. vesicatoria).